We begin with the raw amino-acid sequence, 353 residues long: 6-phosphogluconolactonase (353 aa).

The protein belongs to the cycloisomerase 2 family.

Its subcellular location is the cytoplasm. The catalysed reaction is 6-phospho-D-glucono-1,5-lactone + H2O = 6-phospho-D-gluconate + H(+). Its pathway is carbohydrate degradation; pentose phosphate pathway; D-ribulose 5-phosphate from D-glucose 6-phosphate (oxidative stage): step 2/3. Carboxylic ester hydrolase that may be involved in ulvan degradation. Ulvan is the main polysaccharide component of the Ulvales (green seaweed) cell wall. It is composed of disaccharide building blocks comprising 3-sulfated rhamnose (Rha3S) linked to D-glucuronic acid (GlcA), L-iduronic acid (IduA), or D-xylose (Xyl). Catalyzes the hydrolysis of 6-phosphogluconolactone to 6-phosphogluconate. The protein is 6-phosphogluconolactonase (pgl) of Formosa agariphila (strain DSM 15362 / KCTC 12365 / LMG 23005 / KMM 3901 / M-2Alg 35-1).